Reading from the N-terminus, the 458-residue chain is Histidine--tRNA ligase (458 aa).

This sequence belongs to the class-II aminoacyl-tRNA synthetase family. Homodimer.

It is found in the cytoplasm. It carries out the reaction tRNA(His) + L-histidine + ATP = L-histidyl-tRNA(His) + AMP + diphosphate + H(+). This chain is Histidine--tRNA ligase, found in Azobacteroides pseudotrichonymphae genomovar. CFP2.